The sequence spans 209 residues: Uracil phosphoribosyltransferase (209 aa).

5-phospho-alpha-D-ribose 1-diphosphate is bound by residues Arg-79, Arg-104, and 131 to 139; that span reads DPMLATGHS. Uracil-binding positions include Ile-194 and 199-201; that span reads GDA. Residue Asp-200 coordinates 5-phospho-alpha-D-ribose 1-diphosphate.

The protein belongs to the UPRTase family. The cofactor is Mg(2+).

The enzyme catalyses UMP + diphosphate = 5-phospho-alpha-D-ribose 1-diphosphate + uracil. The protein operates within pyrimidine metabolism; UMP biosynthesis via salvage pathway; UMP from uracil: step 1/1. Allosterically activated by GTP. Catalyzes the conversion of uracil and 5-phospho-alpha-D-ribose 1-diphosphate (PRPP) to UMP and diphosphate. In Caulobacter vibrioides (strain ATCC 19089 / CIP 103742 / CB 15) (Caulobacter crescentus), this protein is Uracil phosphoribosyltransferase.